The primary structure comprises 296 residues: Probable DNA-directed RNA polymerase III subunit RPC6 (296 aa).

This sequence belongs to the eukaryotic RPC34/RPC39 RNA polymerase subunit family.

It localises to the nucleus. Functionally, DNA-dependent RNA polymerase catalyzes the transcription of DNA into RNA using the four ribonucleoside triphosphates as substrates. Specific peripheric component of RNA polymerase III which synthesizes small RNAs, such as 5S rRNA and tRNAs. This is Probable DNA-directed RNA polymerase III subunit RPC6 from Caenorhabditis elegans.